Here is a 501-residue protein sequence, read N- to C-terminus: Glycoprotein 3-alpha-L-fucosyltransferase A (501 aa).

Over 1 to 39 the chain is Cytoplasmic; it reads MGVFSNLRGPKIGLTHEELPVVANGSTSSSSSPSSFKRK. Residues 40-60 form a helical; Signal-anchor for type II membrane protein membrane-spanning segment; the sequence is VSTFLPICVALVVIIEIGFLC. Residues 61 to 501 are Lumenal-facing; it reads RLDNASLVDT…PCPKFEVVFV (441 aa). N-linked (GlcNAc...) asparagine glycosylation is found at Asn64, Asn337, Asn420, and Asn481.

This sequence belongs to the glycosyltransferase 10 family. It depends on Mg(2+) as a cofactor. Mn(2+) is required as a cofactor. Glycosylation may be important for enzymatic activity.

It is found in the golgi apparatus. It localises to the golgi stack membrane. The catalysed reaction is N(4)-{beta-D-GlcNAc-(1-&gt;2)-alpha-D-Man-(1-&gt;3)-[beta-D-GlcNAc-(1-&gt;2)-alpha-D-Man-(1-&gt;6)]-beta-D-Man-(1-&gt;4)-beta-D-GlcNAc-(1-&gt;4)-beta-D-GlcNAc}-L-asparaginyl-[protein] + GDP-beta-L-fucose = N(4)-{beta-D-GlcNAc-(1-&gt;2)-alpha-D-Man-(1-&gt;3)-[beta-D-GlcNAc-(1-&gt;2)-alpha-D-Man-(1-&gt;6)]-beta-D-Man-(1-&gt;4)-beta-D-GlcNAc-(1-&gt;4)-[alpha-L-Fuc(1-&gt;3)]-beta-D-GlcNAc}-L-asparaginyl-[protein] + GDP + H(+). It functions in the pathway protein modification; protein glycosylation. Inhibited by Cu(2+) and Zn(2+). Involved in cell wall synthesis. Preferentially catalyzes the addition of fucose in alpha 1-3 linkage to the first GlcNAc residue next to the peptide chains in N-glycans. The protein is Glycoprotein 3-alpha-L-fucosyltransferase A (FUT11) of Arabidopsis thaliana (Mouse-ear cress).